The primary structure comprises 417 residues: Serine hydroxymethyltransferase (417 aa).

(6S)-5,6,7,8-tetrahydrofolate-binding positions include leucine 121 and 125 to 127 (GHL). Lysine 229 bears the N6-(pyridoxal phosphate)lysine mark. 355–357 (SPF) is a binding site for (6S)-5,6,7,8-tetrahydrofolate.

The protein belongs to the SHMT family. Homodimer. Pyridoxal 5'-phosphate serves as cofactor.

The protein localises to the cytoplasm. It catalyses the reaction (6R)-5,10-methylene-5,6,7,8-tetrahydrofolate + glycine + H2O = (6S)-5,6,7,8-tetrahydrofolate + L-serine. Its pathway is one-carbon metabolism; tetrahydrofolate interconversion. It participates in amino-acid biosynthesis; glycine biosynthesis; glycine from L-serine: step 1/1. Catalyzes the reversible interconversion of serine and glycine with tetrahydrofolate (THF) serving as the one-carbon carrier. This reaction serves as the major source of one-carbon groups required for the biosynthesis of purines, thymidylate, methionine, and other important biomolecules. Also exhibits THF-independent aldolase activity toward beta-hydroxyamino acids, producing glycine and aldehydes, via a retro-aldol mechanism. This is Serine hydroxymethyltransferase from Enterobacter sp. (strain 638).